A 240-amino-acid chain; its full sequence is Probable septum site-determining protein MinC (240 aa).

The protein belongs to the MinC family. Interacts with MinD and FtsZ.

Functionally, cell division inhibitor that blocks the formation of polar Z ring septums. Rapidly oscillates between the poles of the cell to destabilize FtsZ filaments that have formed before they mature into polar Z rings. Prevents FtsZ polymerization. The protein is Probable septum site-determining protein MinC of Chromobacterium violaceum (strain ATCC 12472 / DSM 30191 / JCM 1249 / CCUG 213 / NBRC 12614 / NCIMB 9131 / NCTC 9757 / MK).